A 142-amino-acid polypeptide reads, in one-letter code: Large ribosomal subunit protein uL13 (142 aa).

It belongs to the universal ribosomal protein uL13 family. In terms of assembly, part of the 50S ribosomal subunit.

Functionally, this protein is one of the early assembly proteins of the 50S ribosomal subunit, although it is not seen to bind rRNA by itself. It is important during the early stages of 50S assembly. In Haemophilus influenzae (strain PittGG), this protein is Large ribosomal subunit protein uL13.